The sequence spans 200 residues: Interferon lambda-2 (200 aa).

The N-terminal stretch at 1–25 is a signal peptide; that stretch reads MKLDMTGDCTPVLVLMAAVLTVTGA.

It belongs to the lambda interferon family.

The protein localises to the secreted. Cytokine with antiviral, antitumour and immunomodulatory activities. Plays a critical role in the antiviral host defense, predominantly in the epithelial tissues. Acts as a ligand for the heterodimeric class II cytokine receptor composed of IL10RB and IFNLR1, and receptor engagement leads to the activation of the JAK/STAT signaling pathway resulting in the expression of IFN-stimulated genes (ISG), which mediate the antiviral state. Has a restricted receptor distribution and therefore restricted targets: is primarily active in epithelial cells and this cell type-selective action is because of the epithelial cell-specific expression of its receptor IFNLR1. Seems not to be essential for early virus-activated host defense in vaginal infection, but plays an important role in Toll-like receptor (TLR)-induced antiviral defense. Plays a significant role in the antiviral immune defense in the intestinal epithelium. Exerts an immunomodulatory effect by up-regulating MHC class I antigen expression. The sequence is that of Interferon lambda-2 (IFNL2) from Homo sapiens (Human).